The following is a 56-amino-acid chain: Protein hunchback (56 aa).

C2H2-type zinc fingers lie at residues 1 to 5 (HVRNH), 11 to 33 (HKCG…MKSH), and 39 to 56 (YRCA…SLKL).

This sequence belongs to the hunchback C2H2-type zinc-finger protein family.

The protein localises to the nucleus. Gap class segmentation protein that controls development of head structures. The protein is Protein hunchback (hb) of Bithynia tentaculata (Spire snail).